The sequence spans 79 residues: Small ribosomal subunit protein uS17 (79 aa).

It belongs to the universal ribosomal protein uS17 family. As to quaternary structure, part of the 30S ribosomal subunit.

In terms of biological role, one of the primary rRNA binding proteins, it binds specifically to the 5'-end of 16S ribosomal RNA. The polypeptide is Small ribosomal subunit protein uS17 (Caulobacter sp. (strain K31)).